Consider the following 164-residue polypeptide: SsrA-binding protein (164 aa).

This sequence belongs to the SmpB family.

Its subcellular location is the cytoplasm. Functionally, required for rescue of stalled ribosomes mediated by trans-translation. Binds to transfer-messenger RNA (tmRNA), required for stable association of tmRNA with ribosomes. tmRNA and SmpB together mimic tRNA shape, replacing the anticodon stem-loop with SmpB. tmRNA is encoded by the ssrA gene; the 2 termini fold to resemble tRNA(Ala) and it encodes a 'tag peptide', a short internal open reading frame. During trans-translation Ala-aminoacylated tmRNA acts like a tRNA, entering the A-site of stalled ribosomes, displacing the stalled mRNA. The ribosome then switches to translate the ORF on the tmRNA; the nascent peptide is terminated with the 'tag peptide' encoded by the tmRNA and targeted for degradation. The ribosome is freed to recommence translation, which seems to be the essential function of trans-translation. This Shewanella woodyi (strain ATCC 51908 / MS32) protein is SsrA-binding protein.